A 294-amino-acid polypeptide reads, in one-letter code: 4-hydroxybenzoate octaprenyltransferase (294 aa).

Helical transmembrane passes span 24-44 (IGILLLMWPTLWALWLAADGF), 47-67 (LHLIVIFALGTVLMRSAGCVI), 99-119 (LLAAGLSLVSFVLILPLDPLV), 139-159 (FLAIPQAYLGIAFGFGIPMGF), 164-184 (GEVPAIAWLLLLANIFWAVAY), 213-233 (VAAVMLCYAVAFGLIAAVGIA), 238-258 (PWFFGGIAIAAAIAIYHYTLI), and 274-294 (NWVGAVLFVALVIDYVAFPAA).

Belongs to the UbiA prenyltransferase family. Mg(2+) serves as cofactor.

It localises to the cell inner membrane. The catalysed reaction is all-trans-octaprenyl diphosphate + 4-hydroxybenzoate = 4-hydroxy-3-(all-trans-octaprenyl)benzoate + diphosphate. The protein operates within cofactor biosynthesis; ubiquinone biosynthesis. Its function is as follows. Catalyzes the prenylation of para-hydroxybenzoate (PHB) with an all-trans polyprenyl group. Mediates the second step in the final reaction sequence of ubiquinone-8 (UQ-8) biosynthesis, which is the condensation of the polyisoprenoid side chain with PHB, generating the first membrane-bound Q intermediate 3-octaprenyl-4-hydroxybenzoate. The protein is 4-hydroxybenzoate octaprenyltransferase of Aromatoleum aromaticum (strain DSM 19018 / LMG 30748 / EbN1) (Azoarcus sp. (strain EbN1)).